A 302-amino-acid polypeptide reads, in one-letter code: Acetylglutamate kinase (302 aa).

Substrate contacts are provided by residues 67–68 (GG), arginine 89, and asparagine 194.

It belongs to the acetylglutamate kinase family. ArgB subfamily.

It is found in the cytoplasm. It catalyses the reaction N-acetyl-L-glutamate + ATP = N-acetyl-L-glutamyl 5-phosphate + ADP. The protein operates within amino-acid biosynthesis; L-arginine biosynthesis; N(2)-acetyl-L-ornithine from L-glutamate: step 2/4. Its function is as follows. Catalyzes the ATP-dependent phosphorylation of N-acetyl-L-glutamate. This chain is Acetylglutamate kinase, found in Hahella chejuensis (strain KCTC 2396).